Consider the following 436-residue polypeptide: GTPase Obg (436 aa).

The Obg domain occupies 2 to 160 (SMFLDTAKIQ…RELLLELKVL (159 aa)). The OBG-type G domain occupies 161–338 (ADVGLVGFPS…LLDATAELLD (178 aa)). GTP is bound by residues 167-174 (GFPSVGKS), 192-196 (FTTIV), 214-217 (DLPG), 284-287 (NKMD), and 319-321 (SSL). 2 residues coordinate Mg(2+): Ser-174 and Thr-194. Positions 358–436 (GFDEEAPAFE…IGKFEFEFVD (79 aa)) constitute an OCT domain.

It belongs to the TRAFAC class OBG-HflX-like GTPase superfamily. OBG GTPase family. As to quaternary structure, monomer. Requires Mg(2+) as cofactor.

The protein resides in the cytoplasm. In terms of biological role, an essential GTPase which binds GTP, GDP and possibly (p)ppGpp with moderate affinity, with high nucleotide exchange rates and a fairly low GTP hydrolysis rate. Plays a role in control of the cell cycle, stress response, ribosome biogenesis and in those bacteria that undergo differentiation, in morphogenesis control. This chain is GTPase Obg, found in Streptococcus gordonii (strain Challis / ATCC 35105 / BCRC 15272 / CH1 / DL1 / V288).